A 147-amino-acid polypeptide reads, in one-letter code: Protein archease (147 aa).

Residues Asp17, Asp146, and Ile147 each contribute to the Ca(2+) site.

Belongs to the archease family.

In terms of biological role, activates the tRNA-splicing ligase complex by facilitating the enzymatic turnover of catalytic subunit RtcB. Acts by promoting the guanylylation of RtcB, a key intermediate step in tRNA ligation. Can also alter the NTP specificity of RtcB such that ATP, dGTP or ITP is used efficiently. The chain is Protein archease from Pyrobaculum neutrophilum (strain DSM 2338 / JCM 9278 / NBRC 100436 / V24Sta) (Thermoproteus neutrophilus).